The following is a 166-amino-acid chain: Crossover junction endodeoxyribonuclease RuvC (166 aa).

Catalysis depends on residues D11, E71, and D142. 3 residues coordinate Mg(2+): D11, E71, and D142.

This sequence belongs to the RuvC family. Homodimer which binds Holliday junction (HJ) DNA. The HJ becomes 2-fold symmetrical on binding to RuvC with unstacked arms; it has a different conformation from HJ DNA in complex with RuvA. In the full resolvosome a probable DNA-RuvA(4)-RuvB(12)-RuvC(2) complex forms which resolves the HJ. Requires Mg(2+) as cofactor.

The protein localises to the cytoplasm. The catalysed reaction is Endonucleolytic cleavage at a junction such as a reciprocal single-stranded crossover between two homologous DNA duplexes (Holliday junction).. In terms of biological role, the RuvA-RuvB-RuvC complex processes Holliday junction (HJ) DNA during genetic recombination and DNA repair. Endonuclease that resolves HJ intermediates. Cleaves cruciform DNA by making single-stranded nicks across the HJ at symmetrical positions within the homologous arms, yielding a 5'-phosphate and a 3'-hydroxyl group; requires a central core of homology in the junction. The consensus cleavage sequence is 5'-(A/T)TT(C/G)-3'. Cleavage occurs on the 3'-side of the TT dinucleotide at the point of strand exchange. HJ branch migration catalyzed by RuvA-RuvB allows RuvC to scan DNA until it finds its consensus sequence, where it cleaves and resolves the cruciform DNA. The polypeptide is Crossover junction endodeoxyribonuclease RuvC (Maricaulis maris (strain MCS10) (Caulobacter maris)).